The primary structure comprises 883 residues: Glutamate receptor 2 (883 aa).

Positions 1–24 (MQKIMHISVLLSPVLWGLIFGVSS) are cleaved as a signal peptide. The Extracellular segment spans residues 25–543 (NSIQIGGLFP…GVFSFLDPLA (519 aa)). Cysteines 78 and 330 form a disulfide. N-linked (GlcNAc...) asparagine glycans are attached at residues asparagine 256, asparagine 370, asparagine 406, and asparagine 413. Residues proline 499, threonine 501, and arginine 506 each contribute to the L-glutamate site. The helical transmembrane segment at 544–564 (YEIWMCIVFAYIGVSVVLFLV) threads the bilayer. The Cytoplasmic segment spans residues 565-591 (SRFSPYEWHTEEFEDGRETQSSESTNE). The helical; Pore-forming intramembrane region spans 592–607 (FGIFNSLWFSLGAFMQ). Residues 608–610 (QGC) lie within the membrane without spanning it. The S-palmitoyl cysteine moiety is linked to residue cysteine 610. At 611 to 616 (DISPRS) the chain is on the cytoplasmic side. Residues 617–637 (LSGRIVGGVWWFFTLIIISSY) form a helical membrane-spanning segment. Topologically, residues 638 to 812 (TANLAAFLTV…EKTSALSLSN (175 aa)) are extracellular. 2 residues coordinate L-glutamate: serine 675 and threonine 676. Serine 683 carries the phosphoserine; by PKC modification. The residue at position 717 (serine 717) is a Phosphoserine; by PKG. Glutamate 726 provides a ligand contact to L-glutamate. Cysteine 739 and cysteine 794 form a disulfide bridge. A helical membrane pass occupies residues 813–833 (VAGVFYILVGGLGLAMLVALI). Topologically, residues 834–883 (EFCYKSRAEAKRMKVAKNAQNINPSSSQNSQNFATYKEGYNVYGIESVKI) are cytoplasmic. Cysteine 836 carries the S-palmitoyl cysteine lipid modification. A phosphoserine mark is found at serine 860 and serine 863. A required for interaction with IQSEC1 region spans residues 867–877 (ATYKEGYNVYG). Residue tyrosine 876 is modified to Phosphotyrosine. A Phosphoserine modification is found at serine 880.

The protein belongs to the glutamate-gated ion channel (TC 1.A.10.1) family. GRIA2 subfamily. Homotetramer or heterotetramer of pore-forming glutamate receptor subunits. Tetramers may be formed by the dimerization of dimers. May interact with MPP4. Forms a ternary complex with GRIP1 and CSPG4. Interacts with ATAD1 in an ATP-dependent manner. ATAD1-catalyzed ATP hydrolysis disrupts binding to ATAD1 and to GRIP1 and leads to AMPAR complex disassembly. Interacts with GRIP1 and GRIP2. Interacts with NSF via its C-terminus. Isoform 1, but not isoform 3, interacts with PICK1. Interacts with CACNG2. Interacts with GRIA1 and SYNDIG1. Part of a complex containing GRIA2, NSF and NAPA and/or NAPB. Interacts with SNX27 (via PDZ domain); the interaction is required for recycling to the plasma membrane when endocytosed and prevent degradation in lysosomes. Interacts with LRFN1. Found in a complex with GRIA1, GRIA3, GRIA4, CNIH2, CNIH3, CACNG2, CACNG3, CACNG4, CACNG5, CACNG7 and CACNG8. Interacts with CACNG5. Interacts with OLFM2. Interacts with AP4B1, AP4E1 and AP4M1; probably indirect it mediates the somatodendritic localization of GRIA2 in neurons. Forms a complex with GRIP1, NSG1 and STX12; controls the intracellular fate of AMPAR and the endosomal sorting of the GRIA2 subunit toward recycling and membrane targeting. Interacts with IQSEC1; the interaction is required for ARF6 activation. Interacts (heterotetramer form) with CNIH2 and CNIH3; this interaction promotes expression at the plasma membrane and extensively modulates their gating properties by slowing deactivation and desensitization kinetics. In terms of processing, palmitoylated. Depalmitoylated upon L-glutamate stimulation. Cys-610 palmitoylation leads to Golgi retention and decreased cell surface expression. In contrast, Cys-836 palmitoylation does not affect cell surface expression but regulates stimulation-dependent endocytosis. Ubiquitinated by RNF167, leading to its degradation. Post-translationally, phosphorylation at Tyr-876 is required for interaction with IQSEC1 and ARF6 activation, which in turn triggers AMPAR internalization for persistent synaptic depression. In terms of processing, N-glycosylated.

It is found in the cell membrane. The protein resides in the postsynaptic cell membrane. Its subcellular location is the postsynaptic density membrane. The enzyme catalyses Ca(2+)(in) = Ca(2+)(out). The catalysed reaction is Na(+)(in) = Na(+)(out). In terms of biological role, ionotropic glutamate receptor that functions as a ligand-gated cation channel, gated by L-glutamate and glutamatergic agonists such as alpha-amino-3-hydroxy-5-methyl-4-isoxazolepropionic acid (AMPA), quisqualic acid, and kainic acid. L-glutamate acts as an excitatory neurotransmitter at many synapses in the central nervous system and plays an important role in fast excitatory synaptic transmission. Binding of the excitatory neurotransmitter L-glutamate induces a conformation change, leading to the opening of the cation channel, and thereby converts the chemical signal to an electrical impulse upon entry of monovalent and divalent cations such as sodium and calcium. The receptor then desensitizes rapidly and enters in a transient inactive state, characterized by the presence of bound agonist. In the presence of CACNG4 or CACNG7 or CACNG8, shows resensitization which is characterized by a delayed accumulation of current flux upon continued application of L-glutamate. Through complex formation with NSG1, GRIP1 and STX12 controls the intracellular fate of AMPAR and the endosomal sorting of the GRIA2 subunit toward recycling and membrane targeting. In Homo sapiens (Human), this protein is Glutamate receptor 2.